The chain runs to 131 residues: 23S rRNA-specific endonuclease VapC20 (131 aa).

Residues 2 to 125 enclose the PINc domain; sequence IFVDTSFWAA…FDGDFSAAGF (124 aa). The Mg(2+) site is built by aspartate 5 and aspartate 98.

The protein belongs to the PINc/VapC protein family. Mg(2+) serves as cofactor.

In terms of biological role, toxic component of a type II toxin-antitoxin (TA) system. An endoribonuclease that cleaves 23S rRNA in the sarcin-ricin loop (SRL). The SRL sequence is highly conserved and is implicated in GTP hydrolysis by EF-Tu and EF-G. Acts on purified ribosomes but not on isolated RNA. Its toxic effect is neutralized by coexpression with cognate antitoxin VapB20. The polypeptide is 23S rRNA-specific endonuclease VapC20 (vapC20) (Mycobacterium tuberculosis (strain CDC 1551 / Oshkosh)).